The sequence spans 449 residues: Heterogeneous nuclear ribonucleoprotein H2 (449 aa).

Met1 is subject to N-acetylmethionine. Met2 carries the N-acetylmethionine; in Heterogeneous nuclear ribonucleoprotein H2, N-terminally processed modification. The 80-residue stretch at 11-90 folds into the RRM 1 domain; sequence FVVKVRGLPW…RYVEVFKSNS (80 aa). Phosphoserine is present on Ser23. Residue Lys35 forms a Glycyl lysine isopeptide (Lys-Gly) (interchain with G-Cter in SUMO2) linkage. Phosphoserine is present on residues Ser54 and Ser63. Lys87 participates in a covalent cross-link: Glycyl lysine isopeptide (Lys-Gly) (interchain with G-Cter in SUMO2). At Ser90 the chain carries Phosphoserine. Residue Lys98 forms a Glycyl lysine isopeptide (Lys-Gly) (interchain with G-Cter in SUMO2) linkage. The region spanning 111–188 is the RRM 2 domain; it reads GFVRLRGLPF…RYIEIFKSSR (78 aa). Arg233 carries the dimethylated arginine; alternate modification. Arg233 is subject to Omega-N-methylarginine; alternate. A 1-1 repeat occupies 234 to 249; sequence GAYGGGYGGYDDYGGY. The segment at 234–433 is 2 X 16 AA Gly-rich approximate repeats; that stretch reads GAYGGGYGGY…YGGQSSMSGY (200 aa). Residue Tyr246 is modified to Phosphotyrosine. Residues 289–364 enclose the RRM 3 domain; the sequence is HCVHMRGLPY…RYVELFLNST (76 aa). Ser310 carries the phosphoserine modification. 3 repeat units span residues 354-372, 374-392, and 418-433. The 2 X 19 AA perfect repeats stretch occupies residues 354–392; sequence HRYVELFLNSTAGTSGGAYDHSYVELFLNSTAGASGGAY.

In terms of assembly, component of a ribonucleoprotein complex containing mRNAs and RNA-binding proteins including DDX5, HNRNPH2 and SRSF1 as well as splicing regulator ARVCF. Interacts with TXNL4/DIM1.

The protein resides in the nucleus. The protein localises to the nucleoplasm. Its function is as follows. This protein is a component of the heterogeneous nuclear ribonucleoprotein (hnRNP) complexes which provide the substrate for the processing events that pre-mRNAs undergo before becoming functional, translatable mRNAs in the cytoplasm. Binds poly(RG). This chain is Heterogeneous nuclear ribonucleoprotein H2 (Hnrnph2), found in Mus musculus (Mouse).